Consider the following 207-residue polypeptide: UPF0319 protein VV2327 (207 aa).

The N-terminal stretch at 1-18 (MLRVLGLAGMLMSFNIHA) is a signal peptide.

It belongs to the UPF0319 family.

This is UPF0319 protein VV2327 from Vibrio vulnificus (strain YJ016).